A 368-amino-acid chain; its full sequence is Phospho-N-acetylmuramoyl-pentapeptide-transferase (368 aa).

9 helical membrane-spanning segments follow: residues 30-50 (AAAI…IAYL), 72-92 (LPTM…FLWA), 99-119 (VWLV…DDYL), 135-155 (LIGQ…DPSM), 170-190 (LTIN…TAIS), 201-221 (GLAA…AYLA), 238-258 (GGEV…FLWF), 265-286 (IIMG…ALLI), and 345-365 (KIVI…LMTL).

It belongs to the glycosyltransferase 4 family. MraY subfamily. The cofactor is Mg(2+).

The protein localises to the cell inner membrane. It carries out the reaction UDP-N-acetyl-alpha-D-muramoyl-L-alanyl-gamma-D-glutamyl-meso-2,6-diaminopimeloyl-D-alanyl-D-alanine + di-trans,octa-cis-undecaprenyl phosphate = di-trans,octa-cis-undecaprenyl diphospho-N-acetyl-alpha-D-muramoyl-L-alanyl-D-glutamyl-meso-2,6-diaminopimeloyl-D-alanyl-D-alanine + UMP. It functions in the pathway cell wall biogenesis; peptidoglycan biosynthesis. In terms of biological role, catalyzes the initial step of the lipid cycle reactions in the biosynthesis of the cell wall peptidoglycan: transfers peptidoglycan precursor phospho-MurNAc-pentapeptide from UDP-MurNAc-pentapeptide onto the lipid carrier undecaprenyl phosphate, yielding undecaprenyl-pyrophosphoryl-MurNAc-pentapeptide, known as lipid I. The protein is Phospho-N-acetylmuramoyl-pentapeptide-transferase of Chlorobium chlorochromatii (strain CaD3).